The primary structure comprises 106 residues: UPF0145 protein TM_0763 (106 aa).

It belongs to the UPF0145 family.

The polypeptide is UPF0145 protein TM_0763 (Thermotoga maritima (strain ATCC 43589 / DSM 3109 / JCM 10099 / NBRC 100826 / MSB8)).